The chain runs to 270 residues: Glutamate racemase (270 aa).

Residues 14-15 (DS) and 46-47 (YG) contribute to the substrate site. The active-site Proton donor/acceptor is Cys-77. 78–79 (NT) serves as a coordination point for substrate. Catalysis depends on Cys-189, which acts as the Proton donor/acceptor. Residue 190-191 (TH) coordinates substrate.

This sequence belongs to the aspartate/glutamate racemases family.

The enzyme catalyses L-glutamate = D-glutamate. It participates in cell wall biogenesis; peptidoglycan biosynthesis. Functionally, provides the (R)-glutamate required for cell wall biosynthesis. This Neisseria meningitidis serogroup C protein is Glutamate racemase.